A 314-amino-acid polypeptide reads, in one-letter code: Ribosomal RNA small subunit methyltransferase H (314 aa).

S-adenosyl-L-methionine-binding positions include 37-39, Asp57, Phe84, Asp105, and Gln112; that span reads GSH.

This sequence belongs to the methyltransferase superfamily. RsmH family.

The protein localises to the cytoplasm. It catalyses the reaction cytidine(1402) in 16S rRNA + S-adenosyl-L-methionine = N(4)-methylcytidine(1402) in 16S rRNA + S-adenosyl-L-homocysteine + H(+). In terms of biological role, specifically methylates the N4 position of cytidine in position 1402 (C1402) of 16S rRNA. The chain is Ribosomal RNA small subunit methyltransferase H from Fusobacterium nucleatum subsp. nucleatum (strain ATCC 25586 / DSM 15643 / BCRC 10681 / CIP 101130 / JCM 8532 / KCTC 2640 / LMG 13131 / VPI 4355).